An 80-amino-acid polypeptide reads, in one-letter code: Metallothionein-like protein 2B (80 aa).

The protein belongs to the metallothionein superfamily. Type 15 family. Highly expressed in stems. Expressed in leaves and rachis.

Functionally, metallothioneins have a high content of cysteine residues that bind various heavy metals. The chain is Metallothionein-like protein 2B (MT2B) from Oryza sativa subsp. japonica (Rice).